We begin with the raw amino-acid sequence, 310 residues long: Carbamate kinase 1 (310 aa).

This sequence belongs to the carbamate kinase family.

It localises to the cytoplasm. It catalyses the reaction hydrogencarbonate + NH4(+) + ATP = carbamoyl phosphate + ADP + H2O + H(+). The protein operates within metabolic intermediate metabolism; carbamoyl phosphate degradation; CO(2) and NH(3) from carbamoyl phosphate: step 1/1. This is Carbamate kinase 1 (arcC1) from Staphylococcus aureus (strain MRSA252).